A 244-amino-acid polypeptide reads, in one-letter code: DNA repair protein RecO (244 aa).

It belongs to the RecO family.

Functionally, involved in DNA repair and RecF pathway recombination. This chain is DNA repair protein RecO, found in Jannaschia sp. (strain CCS1).